Reading from the N-terminus, the 769-residue chain is Trehalose 6-phosphate phosphorylase (769 aa).

342–343 provides a ligand contact to substrate; the sequence is WD. The active-site Proton donor is the Glu480. 589-590 provides a ligand contact to substrate; the sequence is KQ.

Belongs to the glycosyl hydrolase 65 family. As to quaternary structure, monomer.

The enzyme catalyses alpha,alpha-trehalose 6-phosphate + phosphate = beta-D-glucose 1-phosphate + D-glucose 6-phosphate. Its function is as follows. Catalyzes the conversion of trehalose 6-phosphate into glucose 1-phosphate and glucose 6-phosphate. The chain is Trehalose 6-phosphate phosphorylase (trePP) from Lactococcus lactis subsp. lactis (strain IL1403) (Streptococcus lactis).